The following is a 197-amino-acid chain: Adenylyl-sulfate kinase (197 aa).

Position 33–40 (33–40) interacts with ATP; the sequence is GLSGSGKS. S107 (phosphoserine intermediate) is an active-site residue.

The protein belongs to the APS kinase family.

The enzyme catalyses adenosine 5'-phosphosulfate + ATP = 3'-phosphoadenylyl sulfate + ADP + H(+). Its pathway is sulfur metabolism; hydrogen sulfide biosynthesis; sulfite from sulfate: step 2/3. Functionally, catalyzes the synthesis of activated sulfate. This Bacillus licheniformis (strain ATCC 14580 / DSM 13 / JCM 2505 / CCUG 7422 / NBRC 12200 / NCIMB 9375 / NCTC 10341 / NRRL NRS-1264 / Gibson 46) protein is Adenylyl-sulfate kinase.